Here is a 616-residue protein sequence, read N- to C-terminus: Xaa-Pro aminopeptidase app-1 (616 aa).

A peptide is bound by residues arginine 78 and histidine 392. Positions 413, 424, and 487 each coordinate Zn(2+). Positions 487, 496, and 522 each coordinate a peptide. The Zn(2+) site is built by glutamate 522 and glutamate 536.

This sequence belongs to the peptidase M24B family. As to quaternary structure, homodimer. May interact with pid-2, pid-4 and pid-5. The cofactor is Zn(2+). As to expression, specifically expressed in the intestine.

It is found in the cytoplasm. It carries out the reaction Release of any N-terminal amino acid, including proline, that is linked to proline, even from a dipeptide or tripeptide.. With respect to regulation, strongly inhibited by the metal ion chelators EDTA and 1,10-phenanthroline. Also inhibited by apstatin. Activity towards bradykinin is inhibited by Mn(2+) and Zn(2+) at all concentrations tested, whereas Co(2+) is inhibitory at concentrations above 100 uM and activatory at 10 uM. Functionally, catalyzes the removal of a penultimate prolyl residue from the N-termini of peptides, such as Arg-Pro-Pro. Has activity towards the flp-9 neuropeptide KPSFVRF-amide. The sequence is that of Xaa-Pro aminopeptidase app-1 from Caenorhabditis elegans.